The sequence spans 283 residues: ATP synthase gamma chain (283 aa).

It belongs to the ATPase gamma chain family. F-type ATPases have 2 components, CF(1) - the catalytic core - and CF(0) - the membrane proton channel. CF(1) has five subunits: alpha(3), beta(3), gamma(1), delta(1), epsilon(1). CF(0) has three main subunits: a, b and c.

The protein resides in the cell membrane. Functionally, produces ATP from ADP in the presence of a proton gradient across the membrane. The gamma chain is believed to be important in regulating ATPase activity and the flow of protons through the CF(0) complex. The protein is ATP synthase gamma chain of Clostridium beijerinckii (strain ATCC 51743 / NCIMB 8052) (Clostridium acetobutylicum).